Consider the following 220-residue polypeptide: Translation initiation factor 6 (220 aa).

Belongs to the eIF-6 family.

In terms of biological role, binds to the 50S ribosomal subunit and prevents its association with the 30S ribosomal subunit to form the 70S initiation complex. In Pyrobaculum arsenaticum (strain DSM 13514 / JCM 11321 / PZ6), this protein is Translation initiation factor 6.